Here is a 320-residue protein sequence, read N- to C-terminus: MAFPKKKLQGLVAATITPMTENGEINFSVIGQYVDYLVKEQGVKNIFVNGTTGEGLSLSVSERRQVAEEWVTKGKDKLDQVIIHVGALSLKESQELAQHAAEIGADGIAVIAPFFLKPWTKDILINFLKEVAAAAPALPFYYYHIPALTGVKIRAEELLDGILDKIPTFQGLKFSDTDLLDFGQCVDQNRQQQFAFLFGVDEQLLSALVMGATGAVGSTYNYLGKKTNQMLEAFEQKDFSLALNYQFCIQRFINFVVKLGFGVSQTKAIMTLVSGIPMGPPRLPLQKASREFTDSAEAKLKSLDFLSFTDLKDGNLEAGS.

Residues Thr51 and Thr52 each contribute to the aceneuramate site. Tyr143 serves as the catalytic Proton donor. The active-site Schiff-base intermediate with substrate is the Lys173. Positions 175, 199, 201, 202, and 218 each coordinate aceneuramate.

The protein belongs to the DapA family. NanA subfamily. As to quaternary structure, homotetramer. Isoform 2 is expressed in placenta, liver, kidney, pancreas, spleen, thymus, ovary, small intestine and peripheral blood leukocyte.

The protein resides in the cytoplasm. It catalyses the reaction aceneuramate = aldehydo-N-acetyl-D-mannosamine + pyruvate. Its pathway is amino-sugar metabolism; N-acetylneuraminate degradation. Catalyzes the cleavage of N-acetylneuraminic acid (sialic acid) to form pyruvate and N-acetylmannosamine via a Schiff base intermediate. It prevents sialic acids from being recycled and returning to the cell surface. Involved in the N-glycolylneuraminic acid (Neu5Gc) degradation pathway. Although human is not able to catalyze formation of Neu5Gc due to the inactive CMAHP enzyme, Neu5Gc is present in food and must be degraded. The sequence is that of N-acetylneuraminate lyase from Homo sapiens (Human).